Here is a 314-residue protein sequence, read N- to C-terminus: tRNA pseudouridine synthase B (314 aa).

His43 provides a ligand contact to substrate. Residue Asp48 is the Nucleophile of the active site. The substrate site is built by Tyr76, Tyr179, and Leu200.

It belongs to the pseudouridine synthase TruB family. Type 1 subfamily.

The enzyme catalyses uridine(55) in tRNA = pseudouridine(55) in tRNA. In terms of biological role, responsible for synthesis of pseudouridine from uracil-55 in the psi GC loop of transfer RNAs. The protein is tRNA pseudouridine synthase B of Cronobacter sakazakii (strain ATCC BAA-894) (Enterobacter sakazakii).